Consider the following 667-residue polypeptide: Beta-galactosidase LacA (667 aa).

Arginine 109 is a substrate binding site. Cysteine 113 serves as a coordination point for Zn(2+). Position 147 (asparagine 147) interacts with substrate. Glutamate 148 functions as the Proton donor in the catalytic mechanism. 3 residues coordinate Zn(2+): cysteine 153, cysteine 155, and cysteine 158. Catalysis depends on glutamate 307, which acts as the Nucleophile. Substrate is bound by residues tryptophan 315 and 355 to 358 (EKFH).

Belongs to the glycosyl hydrolase 42 family.

It catalyses the reaction Hydrolysis of terminal non-reducing beta-D-galactose residues in beta-D-galactosides.. Functionally, hydrolyzes lactose, oNP-galactoside (oNPG), pNP-galactosidase (pNPG), pNP-mannoside, pNP-glucoside, pNP-fucoside, pNP-N-acetylglucosamide, but not pNP-arabinoside or 4-methylumbelliferyl-beta-galactopyranoside (MUG). Transgalactosylates lactose at 10 g/L, but not at 270 g/L. In Lactobacillus acidophilus, this protein is Beta-galactosidase LacA.